A 493-amino-acid chain; its full sequence is Ribose import ATP-binding protein RbsA (493 aa).

ABC transporter domains follow at residues 5-241 (LKIS…VGRR) and 252-491 (EKGE…AAAI). 37 to 44 (GENGAGKS) provides a ligand contact to ATP.

The protein belongs to the ABC transporter superfamily. Ribose importer (TC 3.A.1.2.1) family. The complex is composed of an ATP-binding protein (RbsA), two transmembrane proteins (RbsC) and a solute-binding protein (RbsB).

The protein resides in the cell inner membrane. It carries out the reaction D-ribose(out) + ATP + H2O = D-ribose(in) + ADP + phosphate + H(+). Part of the ABC transporter complex RbsABC involved in ribose import. Responsible for energy coupling to the transport system. This Haemophilus influenzae (strain 86-028NP) protein is Ribose import ATP-binding protein RbsA.